The sequence spans 154 residues: Protein FAM162A (154 aa).

The tract at residues 76-102 (RFKKEDEIPETVSLEMLDAAKNKMRVK) is required for proapoptotic activity. The chain crosses the membrane as a helical span at residues 103 to 120 (ISYLMIALTVVGCIFMVI).

It belongs to the UPF0389 family. In terms of assembly, interacts with HSP90AB1; HSP90AB1 is essential for FAM162A mitochondrial localization and pro-apoptotic activity. Interacts with VDAC2; the interaction is probably involved in inducing mitochondrial permeability transition.

The protein resides in the mitochondrion membrane. Functionally, proposed to be involved in regulation of apoptosis; the exact mechanism may differ between cell types/tissues. May be involved in hypoxia-induced cell death of transformed cells implicating cytochrome C release and caspase activation (such as CASP9) and inducing mitochondrial permeability transition. May be involved in hypoxia-induced cell death of neuronal cells probably by promoting release of AIFM1 from mitochondria to cytoplasm and its translocation to the nucleus; however, the involvement of caspases has been reported conflictingly. This is Protein FAM162A (FAM162A) from Homo sapiens (Human).